Here is a 278-residue protein sequence, read N- to C-terminus: 2-dehydro-3-deoxyphosphooctonate aldolase (278 aa).

This sequence belongs to the KdsA family.

It is found in the cytoplasm. It catalyses the reaction D-arabinose 5-phosphate + phosphoenolpyruvate + H2O = 3-deoxy-alpha-D-manno-2-octulosonate-8-phosphate + phosphate. Its pathway is carbohydrate biosynthesis; 3-deoxy-D-manno-octulosonate biosynthesis; 3-deoxy-D-manno-octulosonate from D-ribulose 5-phosphate: step 2/3. It functions in the pathway bacterial outer membrane biogenesis; lipopolysaccharide biosynthesis. The sequence is that of 2-dehydro-3-deoxyphosphooctonate aldolase from Koribacter versatilis (strain Ellin345).